The sequence spans 331 residues: MRGSFFSRLPPQLSLLLLLSLRRVWTQEDIGTAPSKSPVAPECPEACSCSLGGKANCSALALPAVPADLSWQVRSLLLDHNRVSALPPGAFANAGALLYLDLRENRLRSVHARAFWGLGVLQWLDLSSNQLETLPPGTFAPLRALSFLSLAGNRLALLEPSILGPLPLLRVLSLQDNSLSAIEAGLLNNLPALDVLRLHGNPWTCNCALRPLCTWLRKHPRPASETETLLCVSPRLQTLSLLTAFPDAAFKQCTQSLAARDLAVVYALGPVSFLASLAICLALGSVLTACGARRRRRRRTTVRHLLRRQLDPEGPPSLEDAGSPVTAAIQA.

The signal sequence occupies residues 1–26; the sequence is MRGSFFSRLPPQLSLLLLLSLRRVWT. Topologically, residues 27-261 are extracellular; the sequence is QEDIGTAPSK…QCTQSLAARD (235 aa). The 38-residue stretch at 34–71 folds into the LRRNT domain; it reads PSKSPVAPECPEACSCSLGGKANCSALALPAVPADLSW. 2 disulfide bridges follow: Cys43–Cys49 and Cys47–Cys57. LRR repeat units follow at residues 72–93, 96–117, 120–141, 144–165, and 168–191; these read QVRSLLLDHNRVSALPPGAFAN, ALLYLDLRENRLRSVHARAFWG, VLQWLDLSSNQLETLPPGTFAP, ALSFLSLAGNRLALLEPSILGP, and LLRVLSLQDNSLSAIEAGLLNNLP. In terms of domain architecture, LRRCT spans 201–255; sequence NPWTCNCALRPLCTWLRKHPRPASETETLLCVSPRLQTLSLLTAFPDAAFKQCTQ. Disulfide bonds link Cys205–Cys231 and Cys207–Cys253. Residues 262–282 form a helical membrane-spanning segment; it reads LAVVYALGPVSFLASLAICLA. Residues 283–331 are Cytoplasmic-facing; sequence LGSVLTACGARRRRRRRTTVRHLLRRQLDPEGPPSLEDAGSPVTAAIQA. Residues 310 to 331 are disordered; sequence LDPEGPPSLEDAGSPVTAAIQA.

As to quaternary structure, interacts with KCNMA1.

The protein localises to the cell membrane. Its subcellular location is the cytoplasm. It localises to the cytoskeleton. In terms of biological role, auxiliary protein of the large-conductance, voltage and calcium-activated potassium channel (BK alpha). Required for the conversion of BK alpha channels from a high-voltage to a low-voltage activated channel type in non-excitable cells. These are characterized by negative membrane voltages and constant low levels of calcium. The sequence is that of Leucine-rich repeat-containing protein 26 (Lrrc26) from Mus musculus (Mouse).